Consider the following 382-residue polypeptide: Polyadenylate-binding protein 5 (382 aa).

RRM domains lie at 18 to 96 (AALY…WSQP), 106 to 182 (GNIF…RFKF), 199 to 276 (TNVF…RAQK), and 302 to 378 (VPIY…LGQA).

The protein localises to the cytoplasm. Functionally, binds the poly(A) tail of mRNA. May be involved in cytoplasmic regulatory processes of mRNA metabolism. Can probably bind to cytoplasmic RNA sequences other than poly(A) in vivo. This is Polyadenylate-binding protein 5 (PABPC5) from Macaca mulatta (Rhesus macaque).